Reading from the N-terminus, the 398-residue chain is Palmitoyl-[acyl-carrier-protein] 4-desaturase 3, chloroplastic (398 aa).

The transit peptide at 1 to 29 directs the protein to the chloroplast; that stretch reads MALRSLFLPNAFPNASSFRGGSRRGAAPR. Residues E139, E177, H180, E230, E263, and H266 each contribute to the Fe cation site.

It belongs to the fatty acid desaturase type 2 family. Homodimer. It depends on Fe(2+) as a cofactor. Preferentially expressed in the flower labellum. Low expression in leaves.

It is found in the plastid. Its subcellular location is the chloroplast stroma. The catalysed reaction is hexadecanoyl-[ACP] + 2 reduced [2Fe-2S]-[ferredoxin] + O2 + 2 H(+) = (4Z)-hexadecenoyl-[ACP] + 2 oxidized [2Fe-2S]-[ferredoxin] + 2 H2O. Its pathway is lipid metabolism; fatty acid metabolism. Converts palmitoyl-ACP to (4Z)-hexadec-4-enoyl-ACP by introduction of a cis double bond between carbons 4 and 5 of the acyl chain. The polypeptide is Palmitoyl-[acyl-carrier-protein] 4-desaturase 3, chloroplastic (SAD3) (Ophrys arachnitiformis subsp. archipelagi (Orchid)).